A 166-amino-acid polypeptide reads, in one-letter code: Signal peptidase complex catalytic subunit SEC11 (166 aa).

Over 1 to 9 (MNIRQQLTQ) the chain is Cytoplasmic. A helical; Signal-anchor for type II membrane protein transmembrane segment spans residues 10-30 (FLSLAYVFTSAFVIWKSLGII). Topologically, residues 31–166 (TNSHSPIVVV…MCISTLLTNE (136 aa)) are lumenal. Catalysis depends on charge relay system residues Ser-44, His-83, and Asp-108. The tract at residues 152–163 (GMLGLMCISTLL) is C-terminal short (CTS) helix.

The protein belongs to the peptidase S26B family. Component of the signal peptidase complex (SPC) composed of a catalytic subunit SEC11 and three accessory subunits SPC1, SPC2 and SPC3. The complex induces a local thinning of the ER membrane which is used to measure the length of the signal peptide (SP) h-region of protein substrates. This ensures the selectivity of the complex towards h-regions shorter than 18-20 amino acids. SPC associates with the translocon complex.

Its subcellular location is the endoplasmic reticulum membrane. The catalysed reaction is Cleavage of hydrophobic, N-terminal signal or leader sequences from secreted and periplasmic proteins.. Catalytic component of the signal peptidase complex (SPC) which catalyzes the cleavage of N-terminal signal sequences from nascent proteins as they are translocated into the lumen of the endoplasmic reticulum. Specifically cleaves N-terminal signal peptides that contain a hydrophobic alpha-helix (h-region) shorter than 18-20 amino acids. This is Signal peptidase complex catalytic subunit SEC11 (SEC11) from Scheffersomyces stipitis (strain ATCC 58785 / CBS 6054 / NBRC 10063 / NRRL Y-11545) (Yeast).